A 382-amino-acid chain; its full sequence is Phosphatidylglycerol--prolipoprotein diacylglyceryl transferase (382 aa).

A run of 3 helical transmembrane segments spans residues 18–38, 53–73, and 91–111; these read IQWYGIIVSIGIIFAILMFVF, FFIFIAVLTMVLGARLWSFVI, and LAIQGGILLTSIVGVIYFNFF. Position 162 (Arg-162) interacts with a 1,2-diacyl-sn-glycero-3-phospho-(1'-sn-glycerol). The next 4 membrane-spanning stretches (helical) occupy residues 213 to 233, 243 to 263, 274 to 294, and 302 to 322; these read IPLFLIESFFNTIFFVLIYFV, GTIGFSYFLATGIIRLILENF, ITTSILFIVVGILGIFYCQFI, and FWTYFFLYAFYKVAAFFTTLF.

It belongs to the Lgt family.

It is found in the cell membrane. The catalysed reaction is L-cysteinyl-[prolipoprotein] + a 1,2-diacyl-sn-glycero-3-phospho-(1'-sn-glycerol) = an S-1,2-diacyl-sn-glyceryl-L-cysteinyl-[prolipoprotein] + sn-glycerol 1-phosphate + H(+). It functions in the pathway protein modification; lipoprotein biosynthesis (diacylglyceryl transfer). Its function is as follows. Catalyzes the transfer of the diacylglyceryl group from phosphatidylglycerol to the sulfhydryl group of the N-terminal cysteine of a prolipoprotein, the first step in the formation of mature lipoproteins. This is Phosphatidylglycerol--prolipoprotein diacylglyceryl transferase from Mycoplasma genitalium (strain ATCC 33530 / DSM 19775 / NCTC 10195 / G37) (Mycoplasmoides genitalium).